Consider the following 203-residue polypeptide: Protein shisa-like-1a (203 aa).

Residues Met1–Ser25 form the signal peptide. Residues Ala26–Thr97 are Extracellular-facing. N-linked (GlcNAc...) asparagine glycosylation is found at Asn53, Asn63, Asn72, Asn83, and Asn95. A helical membrane pass occupies residues Ala98–Leu118. Residues Tyr119–Trp203 lie on the Cytoplasmic side of the membrane. The segment at Glu157–Ser191 is disordered. The span at Gly161 to Leu170 shows a compositional bias: low complexity. Over residues His171–Ser184 the composition is skewed to basic residues.

Belongs to the shisa family.

It is found in the membrane. This chain is Protein shisa-like-1a (shisal1a), found in Danio rerio (Zebrafish).